A 423-amino-acid chain; its full sequence is Diaminobutyrate--2-oxoglutarate transaminase (423 aa).

Lys267 is modified (N6-(pyridoxal phosphate)lysine).

This sequence belongs to the class-III pyridoxal-phosphate-dependent aminotransferase family. As to quaternary structure, homohexamer. Requires pyridoxal 5'-phosphate as cofactor.

The enzyme catalyses L-2,4-diaminobutanoate + 2-oxoglutarate = L-aspartate 4-semialdehyde + L-glutamate. The protein operates within amine and polyamine biosynthesis; ectoine biosynthesis; L-ectoine from L-aspartate 4-semialdehyde: step 1/3. Catalyzes reversively the conversion of L-aspartate beta-semialdehyde (ASA) to L-2,4-diaminobutyrate (DABA) by transamination with L-glutamate. The sequence is that of Diaminobutyrate--2-oxoglutarate transaminase (ectB) from Chromohalobacter salexigens (strain ATCC BAA-138 / DSM 3043 / CIP 106854 / NCIMB 13768 / 1H11).